A 399-amino-acid chain; its full sequence is MSQYHTFTAHDAVAYAQQFAGIDNPSELVSAQEVGDGNLNLVFKVFDRQGVSRAIVKQALPYVRCVGESWPLTLDRARLEAQTLVAHYQHSPQHTVKIHHFDPELAVMVMEDLSDHRIWRGELIANVYYPQAARQLGDYLAQVLFHTSDFYLHPHEKKAQVAQFSNPAMCEITEDLFFNDPYQIHERNNYPAELETDVAALRDDAQLKLAVAALKHRFFAHAEALLHGDIHSGSIFVAEGSLKAIDAEFGYFGPIGFDIGTAIGNLLLNYCGLPGQLGIRDAAAAREQRLNDIHQLWTTFAERFQALAAEKTRDAALAYPGYASAFLKKVWADAVGFCGSELIRRSVGLSHVADIDTIQDDAMRHECLRHAITLGKALIVLAERIDSVDELLARVRQYS.

ATP contacts are provided by residues Asn-40, Lys-57, and 111 to 113; that span reads EDL. Substrate is bound at residue Asp-229. Residue 246-248 participates in ATP binding; it reads DAE. Arg-344 is a binding site for substrate.

The protein belongs to the methylthioribose kinase family. In terms of assembly, homodimer.

The catalysed reaction is 5-(methylsulfanyl)-D-ribose + ATP = 5-(methylsulfanyl)-alpha-D-ribose 1-phosphate + ADP + H(+). The protein operates within amino-acid biosynthesis; L-methionine biosynthesis via salvage pathway; S-methyl-5-thio-alpha-D-ribose 1-phosphate from S-methyl-5'-thioadenosine (hydrolase route): step 2/2. In terms of biological role, catalyzes the phosphorylation of methylthioribose into methylthioribose-1-phosphate. This is Methylthioribose kinase from Klebsiella pneumoniae (strain 342).